Here is a 660-residue protein sequence, read N- to C-terminus: MSSKIQQEIADLKKLIRKWDKEYYVDSLPSVEDFVYDKHILRLQELESKCPEYKTLDSPTLKFGSDLLNDFKEVEHSVPVLSLDKVYNLDLLKSWIDKIDFSNSFNISVEPKIDGCSIVLYYKDGILEKALTRGNGKFGNDVTKNIRTIRHVPLFLGEKVDLVLRGEVYITKENFLKINKFLEKPYTNSRNLASGILRRVDSREVANFPLNIFIYDFLNAGLDFKTNNLAIEKLKKLGFKVNPLIRFFDQKSSIKEVLNYIADITKKRNSFEYEIDGVVLKVSDFALREKLGYTLHHPKWAMAYKFEALSGFSKVNSIVVQVGRSGKITPVANIDKVFVSGAFITNATLHNQDYITSINLNVGDIVKVSRRGDVIPAVEMVINKFSTGFFKVPDKCPSCKTVVVKEGAHFFCTNNNCPSVAVERIKYFCSKNCMDIEGFSDKTISFLFEKKFISSEIDLYTFNFYKLLKFKGFKDRKINNLINSIEASKKKPFSKLLLSIGIKELGENTIRLLFLNNLNSFSKLFRLCQDRDFAFLTLLKIKGIGEKIALNIIDAFNNSIMINKFKVFENLGFKMEERILIDDENKLLVGKKFCITGSFNGYSRPIVIDKLENKGAIFKTCVTKGLDFLVVGEKAGTKLKKALNLNVKIMSFEDIKSYLD.

NAD(+)-binding positions include 33 to 37 (DFVYD), 82 to 83 (SL), and Glu110. The N6-AMP-lysine intermediate role is filled by Lys112. NAD(+)-binding residues include Arg133, Glu167, Lys281, and Lys305. Zn(2+) is bound by residues Cys396, Cys399, Cys412, and Cys417. The region spanning 583–660 (DENKLLVGKK…SFEDIKSYLD (78 aa)) is the BRCT domain.

It belongs to the NAD-dependent DNA ligase family. LigA subfamily. Mg(2+) serves as cofactor. The cofactor is Mn(2+).

The enzyme catalyses NAD(+) + (deoxyribonucleotide)n-3'-hydroxyl + 5'-phospho-(deoxyribonucleotide)m = (deoxyribonucleotide)n+m + AMP + beta-nicotinamide D-nucleotide.. In terms of biological role, DNA ligase that catalyzes the formation of phosphodiester linkages between 5'-phosphoryl and 3'-hydroxyl groups in double-stranded DNA using NAD as a coenzyme and as the energy source for the reaction. It is essential for DNA replication and repair of damaged DNA. This is DNA ligase from Borreliella afzelii (strain PKo) (Borrelia afzelii).